A 156-amino-acid polypeptide reads, in one-letter code: Ribonuclease pancreatic (156 aa).

The N-terminal stretch at 1–28 (MALEKSLALLPLLVLVLLVLGWVQPSLG) is a signal peptide. The span at 33-43 (AQKFQRQHMDS) shows a compositional bias: basic and acidic residues. The tract at residues 33–52 (AQKFQRQHMDSDGSPSSNPT) is disordered. Residues Lys-35 and Arg-38 each contribute to the substrate site. Residue His-40 is the Proton acceptor of the active site. 4 cysteine pairs are disulfide-bonded: Cys-54-Cys-112, Cys-68-Cys-123, Cys-86-Cys-138, and Cys-93-Cys-100. An N-linked (GlcNAc...) asparagine glycan is attached at Asn-62. Residues 69–73 (KPVNT), Lys-94, and Arg-113 each bind substrate. Asn-116 carries N-linked (GlcNAc...) asparagine glycosylation. Catalysis depends on His-147, which acts as the Proton donor.

It belongs to the pancreatic ribonuclease family. As to quaternary structure, monomer. Interacts with and forms tight 1:1 complexes with RNH1. Dimerization of two such complexes may occur. Interaction with RNH1 inhibits this protein.

It localises to the secreted. The enzyme catalyses an [RNA] containing cytidine + H2O = an [RNA]-3'-cytidine-3'-phosphate + a 5'-hydroxy-ribonucleotide-3'-[RNA].. The catalysed reaction is an [RNA] containing uridine + H2O = an [RNA]-3'-uridine-3'-phosphate + a 5'-hydroxy-ribonucleotide-3'-[RNA].. Its function is as follows. Endonuclease that catalyzes the cleavage of RNA on the 3' side of pyrimidine nucleotides. Acts on single-stranded and double-stranded RNA. This chain is Ribonuclease pancreatic (RNASE1), found in Saguinus oedipus (Cotton-top tamarin).